We begin with the raw amino-acid sequence, 156 residues long: Transcription antitermination protein NusB (156 aa).

The protein belongs to the NusB family.

Involved in transcription antitermination. Required for transcription of ribosomal RNA (rRNA) genes. Binds specifically to the boxA antiterminator sequence of the ribosomal RNA (rrn) operons. This Mycobacterium tuberculosis (strain CDC 1551 / Oshkosh) protein is Transcription antitermination protein NusB.